The sequence spans 128 residues: MYDNLKSLGITNPEEIDRYSLRQEANNDILKIYFQKDRGEFFAKSVKFKYPRQRKTVVADGIGQGYKEVQEISPNLRYVIDELDQICQRDRTEVDLKRKILDDLRHLESVVANKINEIEADLEKLTRK.

The protein belongs to the UPF0325 family.

The protein is UPF0325 protein CKO_03204 of Citrobacter koseri (strain ATCC BAA-895 / CDC 4225-83 / SGSC4696).